A 252-amino-acid chain; its full sequence is Hydroxyacylglutathione hydrolase (252 aa).

Positions 54, 56, 58, 59, 111, 130, and 170 each coordinate Zn(2+).

The protein belongs to the metallo-beta-lactamase superfamily. Glyoxalase II family. As to quaternary structure, monomer. Zn(2+) is required as a cofactor.

The enzyme catalyses an S-(2-hydroxyacyl)glutathione + H2O = a 2-hydroxy carboxylate + glutathione + H(+). Its pathway is secondary metabolite metabolism; methylglyoxal degradation; (R)-lactate from methylglyoxal: step 2/2. Its function is as follows. Thiolesterase that catalyzes the hydrolysis of S-D-lactoyl-glutathione to form glutathione and D-lactic acid. The protein is Hydroxyacylglutathione hydrolase of Francisella tularensis subsp. novicida (strain U112).